The following is a 931-amino-acid chain: Protein translocase subunit SecA (931 aa).

Residues Gln-87, 105–109 (GEGKT), and Asp-515 each bind ATP. Residues Cys-915, Cys-917, Cys-926, and His-927 each coordinate Zn(2+).

The protein belongs to the SecA family. In terms of assembly, monomer and homodimer. Part of the essential Sec protein translocation apparatus which comprises SecA, SecYEG and auxiliary proteins SecDF-YajC and YidC. Zn(2+) is required as a cofactor.

The protein resides in the cell inner membrane. It is found in the cytoplasm. It carries out the reaction ATP + H2O + cellular proteinSide 1 = ADP + phosphate + cellular proteinSide 2.. In terms of biological role, part of the Sec protein translocase complex. Interacts with the SecYEG preprotein conducting channel. Has a central role in coupling the hydrolysis of ATP to the transfer of proteins into and across the cell membrane, serving both as a receptor for the preprotein-SecB complex and as an ATP-driven molecular motor driving the stepwise translocation of polypeptide chains across the membrane. In Burkholderia pseudomallei (strain 1106a), this protein is Protein translocase subunit SecA.